The following is a 539-amino-acid chain: Chaperonin GroEL (539 aa).

ATP is bound by residues 29–32 (TLGP), 86–90 (DGTTT), G413, 477–479 (NAA), and D493.

This sequence belongs to the chaperonin (HSP60) family. As to quaternary structure, forms a cylinder of 14 subunits composed of two heptameric rings stacked back-to-back. Interacts with the co-chaperonin GroES.

Its subcellular location is the cytoplasm. The catalysed reaction is ATP + H2O + a folded polypeptide = ADP + phosphate + an unfolded polypeptide.. Together with its co-chaperonin GroES, plays an essential role in assisting protein folding. The GroEL-GroES system forms a nano-cage that allows encapsulation of the non-native substrate proteins and provides a physical environment optimized to promote and accelerate protein folding. The polypeptide is Chaperonin GroEL (Clavibacter michiganensis subsp. michiganensis (strain NCPPB 382)).